The chain runs to 373 residues: WAT1-related protein At4g08300 (373 aa).

Transmembrane regions (helical) follow at residues 11 to 31, 41 to 61, 67 to 87, 102 to 122, 139 to 159, 185 to 205, 219 to 239, 255 to 275, 281 to 301, and 306 to 326; these read PIIAIISLQFGYAGMYIITMV, ILATYRHVVATIVIAPFALIL, PKMTWPLFLRILALGFLEPLL, TYSSAFVNALPAITFIMAVIF, IGTAITVGGAMVMTLYKGPAI, WVTGTLAVMGSITTWAGFFIL, LVMWICAMGTVLNTIASLIMV, AAVYSGVVCSGMAYYIQSIVI, VFTTSFSPMCMIITAFLGVLV, and IHLGSIIGAIFIVFGLYSVVW. EamA domains are found at residues 23–151 and 198–325; these read AGMY…AMVM and TWAG…YSVV.

The protein belongs to the drug/metabolite transporter (DMT) superfamily. Plant drug/metabolite exporter (P-DME) (TC 2.A.7.4) family.

The protein resides in the membrane. In Arabidopsis thaliana (Mouse-ear cress), this protein is WAT1-related protein At4g08300.